A 304-amino-acid chain; its full sequence is Oxygen-dependent coproporphyrinogen-III oxidase (304 aa).

Residue serine 94 coordinates substrate. A divalent metal cation contacts are provided by histidine 98 and histidine 108. Catalysis depends on histidine 108, which acts as the Proton donor. Residue 110–112 (NVR) participates in substrate binding. The a divalent metal cation site is built by histidine 147 and histidine 177. An important for dimerization region spans residues 242–277 (YVEFNLVYDRGTLFGLQTGGRTESILMSMPPLVRWE). 260–262 (GGR) is a substrate binding site.

Belongs to the aerobic coproporphyrinogen-III oxidase family. Homodimer. A divalent metal cation is required as a cofactor.

Its subcellular location is the cytoplasm. The enzyme catalyses coproporphyrinogen III + O2 + 2 H(+) = protoporphyrinogen IX + 2 CO2 + 2 H2O. The protein operates within porphyrin-containing compound metabolism; protoporphyrin-IX biosynthesis; protoporphyrinogen-IX from coproporphyrinogen-III (O2 route): step 1/1. Its function is as follows. Involved in the heme biosynthesis. Catalyzes the aerobic oxidative decarboxylation of propionate groups of rings A and B of coproporphyrinogen-III to yield the vinyl groups in protoporphyrinogen-IX. The sequence is that of Oxygen-dependent coproporphyrinogen-III oxidase from Shewanella halifaxensis (strain HAW-EB4).